The chain runs to 1460 residues: Centrosomal protein of 164 kDa (1460 aa).

The segment at 1–194 (MAGRPLRIGD…PSQGLKTSAY (194 aa)) is interaction with ATRIP. One can recognise a WW domain in the interval 56–89 (APLPGEWKPCQDITGDIYYFNFANGQSMWDHPCD). The tract at residues 107–135 (GAIKKKKKKKEKKDKKDRDPPKSSLALGS) is disordered. The span at 109 to 119 (IKKKKKKKEKK) shows a compositional bias: basic residues. S186 is modified (phosphoserine; by ATR and ATM). At S201 the chain carries Phosphoserine. Disordered regions lie at residues 213-412 (GLGE…HGLD), 440-593 (AQQP…AALK), and 658-719 (EEAR…QKNR). Residues 217–227 (ETNEEDEEESD) show a composition bias toward acidic residues. Residues 256–270 (ESLRTSQPEEKKDVS) show a composition bias toward basic and acidic residues. Positions 285–296 (SSPGADSSLSSA) are enriched in low complexity. Basic and acidic residues-rich tracts occupy residues 310–323 (LPEK…EPKI) and 357–367 (EGSRREEAAKE). Residues 453 to 464 (QSSQDELQSKQS) show a composition bias toward low complexity. Over residues 465–481 (KGLEERLSPPLPHEERA) the composition is skewed to basic and acidic residues. A compositionally biased stretch (low complexity) spans 514-525 (SAASLSLQLSLQ). A compositionally biased stretch (basic and acidic residues) spans 537–546 (EKGKEQHSQA). S566 is subject to Phosphoserine. Basic and acidic residues-rich tracts occupy residues 658–668 (EEARMREEESQ) and 686–719 (DQIR…QKNR). The stretch at 1154 to 1206 (GIKALEDMRKNLEKETRHLDEMKSAMRKGHNLLKKKEEKLNQLESSLWEEASD) forms a coiled coil. Residues 1290-1310 (PPPLLASMPAQLPPRDPKSTP) are disordered. Phosphoserine occurs at positions 1386, 1388, and 1443.

Interacts (via N-terminus) with ATRIP. Interacts with ATM, ATR and MDC1. Interacts with XPA (via N-terminus) upon UV irradiation. Interacts with CEP83, CCDC92, TTBK2, DVL3, NPHP3 and weakly with NPHP4. Interacts with DZIP1. Post-translationally, phosphorylation at Ser-186 is induced upon DNA-damage caused by treatment with IR irradiation, UV irradiation, hydroxyurea or amphidicolin. Also MDC1-mediated chromatin remodeling is critical for DNA damage-induced phosphorylation. As to expression, expressed in several cell lines.

It localises to the cytoplasm. It is found in the cytoskeleton. The protein resides in the microtubule organizing center. Its subcellular location is the centrosome. The protein localises to the centriole. It localises to the nucleus. Functionally, plays a role in microtubule organization and/or maintenance for the formation of primary cilia (PC), a microtubule-based structure that protrudes from the surface of epithelial cells. Plays a critical role in G2/M checkpoint and nuclear divisions. A key player in the DNA damage-activated ATR/ATM signaling cascade since it is required for the proper phosphorylation of H2AX, RPA, CHEK2 and CHEK1. Plays a critical role in chromosome segregation, acting as a mediator required for the maintenance of genomic stability through modulation of MDC1, RPA and CHEK1. In Homo sapiens (Human), this protein is Centrosomal protein of 164 kDa (CEP164).